The chain runs to 126 residues: Holo-[acyl-carrier-protein] synthase (126 aa).

Mg(2+) is bound by residues Asp-8 and Glu-60.

The protein belongs to the P-Pant transferase superfamily. AcpS family. Mg(2+) serves as cofactor.

It localises to the cytoplasm. It catalyses the reaction apo-[ACP] + CoA = holo-[ACP] + adenosine 3',5'-bisphosphate + H(+). Transfers the 4'-phosphopantetheine moiety from coenzyme A to a Ser of acyl-carrier-protein. The polypeptide is Holo-[acyl-carrier-protein] synthase (Ehrlichia canis (strain Jake)).